A 161-amino-acid chain; its full sequence is Small ribosomal subunit protein uS9 (161 aa).

This sequence belongs to the universal ribosomal protein uS9 family.

The chain is Small ribosomal subunit protein uS9 from Rickettsia felis (strain ATCC VR-1525 / URRWXCal2) (Rickettsia azadi).